We begin with the raw amino-acid sequence, 1025 residues long: Complement receptor type 2 (1025 aa).

Residues 1–11 (MLTWFLFYFSE) form the signal peptide. The Sushi 1 domain occupies 12 to 75 (ISCDPPPEVK…WDKAPPICES (64 aa)). At 12 to 963 (ISCDPPPEVK…PLALCKYRRW (952 aa)) the chain is on the extracellular side. 2 disulfide bridges follow: Cys14-Cys56 and Cys42-Cys73. N-linked (GlcNAc...) asparagine glycosylation is found at Asn77 and Asn113. 14 Sushi domains span residues 80–140 (ISCS…VCES), 144–204 (LECP…TCKE), 205–265 (AQCE…VCKE), 266–336 (ILCP…YCVL), 341–400 (VLCL…VCEK), 401–460 (GCQA…QCTV), 461–516 (AECK…LCKE), 517–587 (ITCP…LCKL), 592–651 (VQCT…LCKK), 652–706 (EGCE…VCTV), 707–771 (ILCQ…QCLQ), 776–835 (THCP…TCIR), 839–899 (LGCQ…FCKE), and 900–960 (VNCS…LCKY). Intrachain disulfides connect Cys82–Cys124, Cys110–Cys138, Cys146–Cys189, Cys175–Cys202, Cys207–Cys248, Cys234–Cys263, Cys268–Cys317, Cys297–Cys334, Cys343–Cys385, Cys371–Cys398, Cys402–Cys445, Cys431–Cys458, Cys463–Cys501, Cys487–Cys514, Cys519–Cys568, Cys548–Cys585, Cys594–Cys636, Cys622–Cys649, Cys654–Cys689, Cys675–Cys704, Cys709–Cys752, Cys738–Cys769, Cys778–Cys820, Cys806–Cys833, Cys841–Cys884, and Cys870–Cys897. N-linked (GlcNAc...) asparagine glycans are attached at residues Asn276, Asn316, Asn364, and Asn380. An N-linked (GlcNAc...) asparagine glycan is attached at Asn484. Residue Asn527 is glycosylated (N-linked (GlcNAc...) asparagine). Asn615 and Asn639 each carry an N-linked (GlcNAc...) asparagine glycan. Asn694 carries N-linked (GlcNAc...) asparagine glycosylation. 5 N-linked (GlcNAc...) asparagine glycosylation sites follow: Asn754, Asn790, Asn813, Asn823, and Asn851. Asn901 is a glycosylation site (N-linked (GlcNAc...) asparagine). 2 disulfide bridges follow: Cys902-Cys945 and Cys931-Cys958. The chain crosses the membrane as a helical span at residues 964–990 (STIPLICGISVGSALIILMSVGFCMIL). The Cytoplasmic portion of the chain corresponds to 991 to 1025 (KHRESNYYTKTRPKEGALHLETREVYSIDPYNPAS).

This sequence belongs to the receptors of complement activation (RCA) family. Interacts (via Sushi domain 1 and 2) with C3. Interacts with CD19. Part of a complex composed of CD19, CR2/CD21, CD81 and IFITM1/CD225 in the membrane of mature B-cells. Interacts (via Sushi domain 1 and 2) with FCER2 (via the C-terminus). Interacts with CD23. Interacts with FCRL5. Interacts with CR1. Interacts with INFNA1. B-lymphocytes.

It is found in the cell membrane. In terms of biological role, serves as a receptor for various ligands including complement component CD3d, HNRNPU OR IFNA1. When C3d is bound to antigens, attaches to C3d on B-cell surface and thereby facilitates the recognition and uptake of antigens by B-cells. This interaction enhances B-cell activation and subsequent immune responses. Forms a complex with several partners on the surface of B-cells including CD19, FCRL5 and CD81, to form the B-cell coreceptor complex that plays a crucial role in B-cell activation and signaling. Also induces specific intracellular signaling separately from the BCR and CD19 by activating the tyrosine kinase SRC, which then phosphorylates nucleolin/NCL and triggers AKT and GSK3 kinase activities in a SYK/CD19-independent manner. Acts as a ligand for CD23 (FcepsilonRII), a low-affinity receptor for IgE, which is expressed on B-cells and other immune cells, and thus participates in the regulation of IgE production. The polypeptide is Complement receptor type 2 (Cr2) (Mus musculus (Mouse)).